The sequence spans 1152 residues: Receptor-type guanylate cyclase gcy-8 (1152 aa).

The first 21 residues, 1 to 21, serve as a signal peptide directing secretion; it reads MRTKKAFLLLTFNVLIYLAAC. The Extracellular portion of the chain corresponds to 22–506; the sequence is QETERILANN…GYRNERCDYT (485 aa). 4 N-linked (GlcNAc...) asparagine glycosylation sites follow: Asn31, Asn55, Asn385, and Asn465. Residues 507–527 form a helical membrane-spanning segment; it reads LIIIGAALILLFIVAAVSAFF. Over 528 to 1152 the chain is Cytoplasmic; sequence AQKILEKRAL…NLKNPTGLQR (625 aa). A Protein kinase domain is found at 567–857; that stretch reads RTKMSNMNYG…RIKLNVETYL (291 aa). Residues 573-581 and Lys593 contribute to the ATP site; that span reads MNYGSRNHA. Residues 861–899 adopt a coiled-coil conformation; the sequence is GSLVDQMTRMMEQYANNLEKLVAERTGMLEEANQRADRL. Positions 927–1057 constitute a Guanylate cyclase domain; the sequence is TVLFSDIVGF…DTVNMASRME (131 aa). Mg(2+) is bound by residues Asp932, Ile933, and Asp976.

It belongs to the adenylyl cyclase class-4/guanylyl cyclase family. Expressed bilaterally in AFD sensory neurons.

It localises to the cell membrane. Its subcellular location is the cell projection. The protein localises to the cilium. It catalyses the reaction GTP = 3',5'-cyclic GMP + diphosphate. Inhibited by chloride with an IC(50) of 60 mM. Guanylate cyclase involved in the production of the second messenger cGMP. Regulates thermotaxis responses in AFD sensory neurons. May regulate AFD neuronal activity such as calcium responses to temperature gradients. Maintains the microvilli receptive ending morphology of the AFD thermosensory neurons by regulating cGMP levels downstream of kcc-3. cGMP levels antagonize the actin cytoskeleton regulator wsp-1. The protein is Receptor-type guanylate cyclase gcy-8 of Caenorhabditis elegans.